Consider the following 545-residue polypeptide: CTP synthase (545 aa).

The interval 1 to 266 (MTTNYIFVTG…DDYICKRFSL (266 aa)) is amidoligase domain. S14 contributes to the CTP binding site. S14 provides a ligand contact to UTP. ATP contacts are provided by residues 15 to 20 (SLGKGI) and D72. Mg(2+) is bound by residues D72 and E140. CTP-binding positions include 147–149 (DIE), 187–192 (KTKPTQ), and K223. UTP-binding positions include 187–192 (KTKPTQ) and K223. An ATP-binding site is contributed by 239–241 (KDV). One can recognise a Glutamine amidotransferase type-1 domain in the interval 291–542 (TIGMIGKYVE…VKAAGEYQKR (252 aa)). Position 352 (G352) interacts with L-glutamine. C379 acts as the Nucleophile; for glutamine hydrolysis in catalysis. L-glutamine is bound by residues 380–383 (LGMQ), E403, and R470. Catalysis depends on residues H515 and E517.

It belongs to the CTP synthase family. In terms of assembly, homotetramer.

It carries out the reaction UTP + L-glutamine + ATP + H2O = CTP + L-glutamate + ADP + phosphate + 2 H(+). It catalyses the reaction L-glutamine + H2O = L-glutamate + NH4(+). The catalysed reaction is UTP + NH4(+) + ATP = CTP + ADP + phosphate + 2 H(+). Its pathway is pyrimidine metabolism; CTP biosynthesis via de novo pathway; CTP from UDP: step 2/2. Its activity is regulated as follows. Allosterically activated by GTP, when glutamine is the substrate; GTP has no effect on the reaction when ammonia is the substrate. The allosteric effector GTP functions by stabilizing the protein conformation that binds the tetrahedral intermediate(s) formed during glutamine hydrolysis. Inhibited by the product CTP, via allosteric rather than competitive inhibition. In terms of biological role, catalyzes the ATP-dependent amination of UTP to CTP with either L-glutamine or ammonia as the source of nitrogen. Regulates intracellular CTP levels through interactions with the four ribonucleotide triphosphates. The protein is CTP synthase of Yersinia enterocolitica serotype O:8 / biotype 1B (strain NCTC 13174 / 8081).